The chain runs to 227 residues: Cytochrome c oxidase subunit 2 (227 aa).

Over 1-14 the chain is Mitochondrial intermembrane; it reads MAYPFQLGLQDATS. The helical transmembrane segment at 15–45 threads the bilayer; that stretch reads PIMEELTNFHDHTLMIVFLISSLVLYIISSM. The Mitochondrial matrix segment spans residues 46–59; it reads LATKMTHTSTMDAQ. A helical membrane pass occupies residues 60-87; it reads SMETIWTILPAVILVLIALPSLRILYMM. Residues 88-227 lie on the Mitochondrial intermembrane side of the membrane; that stretch reads DEINNPVLTV…FFENWSASMI (140 aa). H161, C196, E198, C200, H204, and M207 together coordinate Cu cation. Mg(2+) is bound at residue E198.

The protein belongs to the cytochrome c oxidase subunit 2 family. As to quaternary structure, component of the cytochrome c oxidase (complex IV, CIV), a multisubunit enzyme composed of 14 subunits. The complex is composed of a catalytic core of 3 subunits MT-CO1, MT-CO2 and MT-CO3, encoded in the mitochondrial DNA, and 11 supernumerary subunits COX4I, COX5A, COX5B, COX6A, COX6B, COX6C, COX7A, COX7B, COX7C, COX8 and NDUFA4, which are encoded in the nuclear genome. The complex exists as a monomer or a dimer and forms supercomplexes (SCs) in the inner mitochondrial membrane with NADH-ubiquinone oxidoreductase (complex I, CI) and ubiquinol-cytochrome c oxidoreductase (cytochrome b-c1 complex, complex III, CIII), resulting in different assemblies (supercomplex SCI(1)III(2)IV(1) and megacomplex MCI(2)III(2)IV(2)). Found in a complex with TMEM177, COA6, COX18, COX20, SCO1 and SCO2. Interacts with TMEM177 in a COX20-dependent manner. Interacts with COX20. Interacts with COX16. The cofactor is Cu cation.

It is found in the mitochondrion inner membrane. The enzyme catalyses 4 Fe(II)-[cytochrome c] + O2 + 8 H(+)(in) = 4 Fe(III)-[cytochrome c] + 2 H2O + 4 H(+)(out). Component of the cytochrome c oxidase, the last enzyme in the mitochondrial electron transport chain which drives oxidative phosphorylation. The respiratory chain contains 3 multisubunit complexes succinate dehydrogenase (complex II, CII), ubiquinol-cytochrome c oxidoreductase (cytochrome b-c1 complex, complex III, CIII) and cytochrome c oxidase (complex IV, CIV), that cooperate to transfer electrons derived from NADH and succinate to molecular oxygen, creating an electrochemical gradient over the inner membrane that drives transmembrane transport and the ATP synthase. Cytochrome c oxidase is the component of the respiratory chain that catalyzes the reduction of oxygen to water. Electrons originating from reduced cytochrome c in the intermembrane space (IMS) are transferred via the dinuclear copper A center (CU(A)) of subunit 2 and heme A of subunit 1 to the active site in subunit 1, a binuclear center (BNC) formed by heme A3 and copper B (CU(B)). The BNC reduces molecular oxygen to 2 water molecules using 4 electrons from cytochrome c in the IMS and 4 protons from the mitochondrial matrix. In Acomys wilsoni (Wilson's spiny mouse), this protein is Cytochrome c oxidase subunit 2 (MT-CO2).